Here is a 216-residue protein sequence, read N- to C-terminus: Small ribosomal subunit protein uS4 (216 aa).

In terms of domain architecture, S4 RNA-binding spans 111–175 (RRLQTQVLRL…SPLVSESHPE (65 aa)). Residues 194 to 216 (VAEAKQAKEKPPERGGRKRRGRR) are disordered. Residues 198 to 208 (KQAKEKPPERG) are compositionally biased toward basic and acidic residues.

The protein belongs to the universal ribosomal protein uS4 family. Part of the 30S ribosomal subunit. Contacts protein S5. The interaction surface between S4 and S5 is involved in control of translational fidelity.

Its function is as follows. One of the primary rRNA binding proteins, it binds directly to 16S rRNA where it nucleates assembly of the body of the 30S subunit. With S5 and S12 plays an important role in translational accuracy. This chain is Small ribosomal subunit protein uS4, found in Methanosarcina barkeri (strain Fusaro / DSM 804).